Reading from the N-terminus, the 97-residue chain is Spermatogenesis-associated protein 45 (97 aa).

It belongs to the SPATA45 family.

In Mus musculus (Mouse), this protein is Spermatogenesis-associated protein 45 (Spata45).